Here is a 511-residue protein sequence, read N- to C-terminus: MITTVIIAIVCFAVGGGLSYMLFRYGLKSKYDIIIKEAQTEAEVIKKNKLLEVKEKFLNKKADLEKEVALRNQKIQQAENKLKQRELMLNQKQEEVQRKRTEAEAIKENLEAQIVIIDKKKDELDKLQMQEREKLEALSGLSAEEAKERLIESLKEEAKTQAASYINDIMDDAKLTANKEAKRIVIQSIQRVATETAIENSVTVFHIESDEIKGRIIGREGRNIRALEAATGVEIVVDDTPEAIVLSAFDPVRREIARLALHQLVTDGRIHPARIEEVVAKVRKQVEEEIIETGKRTTIDLGIHGLHPELIRIIGKMKYRSSYGQNLLQHARETANLCAVMASELGLNPKKAKRAGLLHDIGKVPDEEPELPHALLGMKIAEKYKEKPDICNAIGAHHDETEMTSLLAPIVQVCDAISGARPGARREIVEAYIKRLNDLEQLAMSYPGVTKTYAIQAGRELRVIVGADKIDDKQTESLSGEIAKKIQDEMTYPGQVKITVIRETRAVSFAK.

Residues 2–22 (ITTVIIAIVCFAVGGGLSYML) traverse the membrane as a helical segment. One can recognise a KH domain in the interval 201–261 (SVTVFHIESD…VRREIARLAL (61 aa)). The HD domain maps to 327-420 (LLQHARETAN…VQVCDAISGA (94 aa)).

It belongs to the RNase Y family.

It localises to the cell membrane. Its function is as follows. Endoribonuclease that initiates mRNA decay. The sequence is that of Ribonuclease Y from Phocaeicola vulgatus (strain ATCC 8482 / DSM 1447 / JCM 5826 / CCUG 4940 / NBRC 14291 / NCTC 11154) (Bacteroides vulgatus).